The chain runs to 287 residues: ATP synthase gamma chain (287 aa).

Belongs to the ATPase gamma chain family. As to quaternary structure, F-type ATPases have 2 components, CF(1) - the catalytic core - and CF(0) - the membrane proton channel. CF(1) has five subunits: alpha(3), beta(3), gamma(1), delta(1), epsilon(1). CF(0) has three main subunits: a, b and c.

The protein localises to the cell inner membrane. Produces ATP from ADP in the presence of a proton gradient across the membrane. The gamma chain is believed to be important in regulating ATPase activity and the flow of protons through the CF(0) complex. This is ATP synthase gamma chain from Xanthomonas axonopodis pv. citri (strain 306).